Reading from the N-terminus, the 499-residue chain is Phenylalanine--tRNA ligase alpha subunit (499 aa).

L-phenylalanine contacts are provided by residues Thr-333, 372–374 (QIE), and Tyr-412. Mg(2+) is bound at residue Glu-414. Phe-436 provides a ligand contact to L-phenylalanine.

This sequence belongs to the class-II aminoacyl-tRNA synthetase family. Phe-tRNA synthetase alpha subunit type 2 subfamily. Tetramer of two alpha and two beta subunits. Requires Mg(2+) as cofactor.

The protein localises to the cytoplasm. It catalyses the reaction tRNA(Phe) + L-phenylalanine + ATP = L-phenylalanyl-tRNA(Phe) + AMP + diphosphate + H(+). The sequence is that of Phenylalanine--tRNA ligase alpha subunit from Thermoplasma acidophilum (strain ATCC 25905 / DSM 1728 / JCM 9062 / NBRC 15155 / AMRC-C165).